Here is a 280-residue protein sequence, read N- to C-terminus: 4-diphosphocytidyl-2-C-methyl-D-erythritol kinase (280 aa).

Residue K8 is part of the active site. Position 91–101 (91–101) interacts with ATP; the sequence is PVAAGLAGGST. The active site involves D133.

This sequence belongs to the GHMP kinase family. IspE subfamily.

It carries out the reaction 4-CDP-2-C-methyl-D-erythritol + ATP = 4-CDP-2-C-methyl-D-erythritol 2-phosphate + ADP + H(+). It functions in the pathway isoprenoid biosynthesis; isopentenyl diphosphate biosynthesis via DXP pathway; isopentenyl diphosphate from 1-deoxy-D-xylulose 5-phosphate: step 3/6. In terms of biological role, catalyzes the phosphorylation of the position 2 hydroxy group of 4-diphosphocytidyl-2C-methyl-D-erythritol. This Clostridium botulinum (strain Okra / Type B1) protein is 4-diphosphocytidyl-2-C-methyl-D-erythritol kinase.